The primary structure comprises 304 residues: Galactose 1-dehydrogenase (304 aa).

The protein belongs to the Gfo/Idh/MocA family. As to quaternary structure, homodimer.

It is found in the cytoplasm. The catalysed reaction is D-galactose + NAD(+) = D-galactono-1,4-lactone + NADH + H(+). Its pathway is carbohydrate metabolism; galactose metabolism. Catalyzes the dehydrogenation of D-galactose by either NAD(+) or NADP(+). Oxidizes following sugars in decreasing order: D-fucose &gt; D-galactose &gt; L-arabinose &gt; 2-deoxy-D-galactose &gt;&gt; 4-deoxy-D-galactose &gt; 2-deoxy-2-amino-D-galactose. The polypeptide is Galactose 1-dehydrogenase (gal) (Pseudomonas fluorescens).